The primary structure comprises 142 residues: ATP synthase epsilon chain (142 aa).

It belongs to the ATPase epsilon chain family. F-type ATPases have 2 components, CF(1) - the catalytic core - and CF(0) - the membrane proton channel. CF(1) has five subunits: alpha(3), beta(3), gamma(1), delta(1), epsilon(1). CF(0) has three main subunits: a, b and c.

It is found in the cell inner membrane. Produces ATP from ADP in the presence of a proton gradient across the membrane. This is ATP synthase epsilon chain from Shewanella sediminis (strain HAW-EB3).